We begin with the raw amino-acid sequence, 197 residues long: Imidazoleglycerol-phosphate dehydratase (197 aa).

The protein belongs to the imidazoleglycerol-phosphate dehydratase family.

The protein localises to the cytoplasm. It carries out the reaction D-erythro-1-(imidazol-4-yl)glycerol 3-phosphate = 3-(imidazol-4-yl)-2-oxopropyl phosphate + H2O. It functions in the pathway amino-acid biosynthesis; L-histidine biosynthesis; L-histidine from 5-phospho-alpha-D-ribose 1-diphosphate: step 6/9. In Bradyrhizobium sp. (strain BTAi1 / ATCC BAA-1182), this protein is Imidazoleglycerol-phosphate dehydratase.